Here is a 297-residue protein sequence, read N- to C-terminus: Octopine catabolism/uptake operon regulatory protein OccR (297 aa).

The HTH lysR-type domain maps to 1-58; sequence MNLRQVEAFRAVMLTGQMTAAAELMLVTQPAISRLIKDFERATKLQLFERRGNHIIPT. The segment at residues 18 to 37 is a DNA-binding region (H-T-H motif); it reads MTAAAELMLVTQPAISRLIK.

Belongs to the LysR transcriptional regulatory family.

Its function is as follows. Positive regulatory protein for the occ operon involved in octopine catabolism and uptake. Also acts as a negative regulator of its expression. The chain is Octopine catabolism/uptake operon regulatory protein OccR (occR) from Rhizobium meliloti (Ensifer meliloti).